The following is a 576-amino-acid chain: Proton pump-interactor 3B (576 aa).

The disordered stretch occupies residues 34–63 (SEVTTDEEEDTIFSGGDSSSGLAAEEDSSG). Coiled-coil stretches lie at residues 132 to 155 (RMVI…LRCT) and 205 to 241 (EKEA…SDKL). Over residues 369 to 381 (RSEKVHKMNREDS) the composition is skewed to basic and acidic residues. The segment at 369-395 (RSEKVHKMNREDSSSNSSEDGNVITDK) is disordered. The stretch at 411-467 (KKKEEEIDEEALKERKREEQLEKARLVMERKRKLQEKAAAKAAIRAQKEAEKKLKAI) forms a coiled coil. A helical transmembrane segment spans residues 555 to 575 (WVWGLSSAALAVSLVLVVLLL).

Belongs to the plant Proton pump-interactor protein family.

The protein resides in the cell membrane. It localises to the endoplasmic reticulum membrane. Its function is as follows. May regulate plasma membrane ATPase activity. The polypeptide is Proton pump-interactor 3B (PPI3B) (Arabidopsis thaliana (Mouse-ear cress)).